A 132-amino-acid chain; its full sequence is uncharacterized protein (132 aa).

K59 participates in a covalent cross-link: Glycyl lysine isopeptide (Lys-Gly) (interchain with G-Cter in SAMP2).

This sequence belongs to the OsmC/Ohr family.

This is an uncharacterized protein from Haloferax volcanii (strain ATCC 29605 / DSM 3757 / JCM 8879 / NBRC 14742 / NCIMB 2012 / VKM B-1768 / DS2) (Halobacterium volcanii).